The primary structure comprises 463 residues: Chromosomal replication initiator protein DnaA (463 aa).

The domain I, interacts with DnaA modulators stretch occupies residues 1 to 90 (MSLSLWQQCL…KPLSQIISQT (90 aa)). The interval 91–126 (VTASVSAPSAPIVRVAAPSRPSWDNAAPQPELSYRS) is domain II. Residues 127–343 (NVNPKHTFDN…GALNRVIANA (217 aa)) are domain III, AAA+ region. Residues G171, G173, K174, and T175 each coordinate ATP. Positions 344–463 (NFTGRAITID…FSNLIRTLSS (120 aa)) are domain IV, binds dsDNA.

The protein belongs to the DnaA family. Oligomerizes as a right-handed, spiral filament on DNA at oriC.

It is found in the cytoplasm. Plays an essential role in the initiation and regulation of chromosomal replication. ATP-DnaA binds to the origin of replication (oriC) to initiate formation of the DNA replication initiation complex once per cell cycle. Binds the DnaA box (a 9 base pair repeat at the origin) and separates the double-stranded (ds)DNA. Forms a right-handed helical filament on oriC DNA; dsDNA binds to the exterior of the filament while single-stranded (ss)DNA is stabiized in the filament's interior. The ATP-DnaA-oriC complex binds and stabilizes one strand of the AT-rich DNA unwinding element (DUE), permitting loading of DNA polymerase. After initiation quickly degrades to an ADP-DnaA complex that is not apt for DNA replication. Binds acidic phospholipids. The protein is Chromosomal replication initiator protein DnaA of Serratia proteamaculans (strain 568).